A 1134-amino-acid polypeptide reads, in one-letter code: Protocadherin 18 (1134 aa).

Positions 1–27 (MHQMNTKMHFRFALALLMAFFSHDVLA) are cleaved as a signal peptide. 6 Cadherin domains span residues 28 to 137 (KNLK…SPQF), 138 to 246 (SRPV…SPAF), 247 to 354 (EQPS…KPEI), 361 to 465 (PGKE…PPRF), 466 to 576 (QRSR…VPVV), and 582 to 688 (HNNT…STAM). The Extracellular portion of the chain corresponds to 28-699 (KNLKYRIYEE…SVSRASLDVS (672 aa)). An N-linked (GlcNAc...) asparagine glycan is attached at asparagine 103. An N-linked (GlcNAc...) asparagine glycan is attached at asparagine 269. An N-linked (GlcNAc...) asparagine glycan is attached at asparagine 559. A helical transmembrane segment spans residues 700–720 (MIIIISLGAICAVLLVIMVLF). Residues 721–1134 (ATRCNREKKD…NKLLQDVRQS (414 aa)) lie on the Cytoplasmic side of the membrane. Disordered regions lie at residues 769–800 (LPIRSHHRSSPSSSPTLERGQMGSRQSHNSHQ), 868–888 (SLKDSGRGDSEAGDSDYDLGR), 941–1004 (DYRS…SSLL), and 1022–1083 (FSEC…PSSK). A compositionally biased stretch (polar residues) spans 791–800 (GSRQSHNSHQ). Residues 868 to 877 (SLKDSGRGDS) show a composition bias toward basic and acidic residues. The segment at 892 to 1134 (IDRLLGEGFS…NKLLQDVRQS (243 aa)) is interaction with DAB1. Basic and acidic residues predominate over residues 1027–1038 (EGDRSNSLERRK). The segment covering 1059–1082 (THFQNPTSSSGTPLGTHSSVQPSS) has biased composition (polar residues).

In terms of assembly, interacts with DAB1. As to expression, predominantly expressed in kidney and lung.

The protein resides in the cell membrane. Its function is as follows. Potential calcium-dependent cell-adhesion protein. The protein is Protocadherin 18 (Pcdh18) of Mus musculus (Mouse).